A 268-amino-acid polypeptide reads, in one-letter code: Zinc finger protein SNAI2 (268 aa).

Residues Met1–Ser20 form an SNAG domain region. Residues Pro80–Leu117 are disordered. C2H2-type zinc fingers lie at residues Phe128–His150, Phe159–His181, Cys185–His207, and Phe213–His235. The segment at Tyr241 to Cys264 adopts a C2H2-type 5; atypical zinc-finger fold.

This sequence belongs to the snail C2H2-type zinc-finger protein family. In terms of assembly, interacts (via SNAG domain) with LIMD1 (via LIM domains), WTIP (via LIM domains) and AJUBA (via LIM domains). Interacts (via zinc fingers) with KPNA2, KPNB1, and TNPO1. May interact (via zinc fingers) with IPO7. Post-translationally, phosphorylated by GSK3B. Once phosphorylated, it becomes a target for ubiquitination. Ubiquitinated by the SCF(FBXO11) complex; ubiquitination requires previous GSK3B-mediated SNAI2 phosphorylation.

The protein resides in the nucleus. It localises to the cytoplasm. Functionally, transcriptional repressor that modulates both activator-dependent and basal transcription. Involved in the generation and migration of neural crest cells. Plays a role in mediating RAF1-induced transcriptional repression of the TJ protein, occludin (OCLN) and subsequent oncogenic transformation of epithelial cells. Represses BRCA2 expression by binding to its E2-box-containing silencer and recruiting CTBP1 and HDAC1 in breast cells. In epidermal keratinocytes, binds to the E-box in ITGA3 promoter and represses its transcription. Involved in the regulation of ITGB1 and ITGB4 expression and cell adhesion and proliferation in epidermal keratinocytes. Binds to E-box2 domain of BSG and activates its expression during TGFB1-induced epithelial-mesenchymal transition (EMT) in hepatocytes. Represses E-Cadherin/CDH1 transcription via E-box elements. Involved in osteoblast maturation. Binds to RUNX2 and SOC9 promoters and may act as a positive and negative transcription regulator, respectively, in osteoblasts. Binds to CXCL12 promoter via E-box regions in mesenchymal stem cells and osteoblasts. Plays an essential role in TWIST1-induced EMT and its ability to promote invasion and metastasis. This chain is Zinc finger protein SNAI2 (SNAI2), found in Bos taurus (Bovine).